A 330-amino-acid chain; its full sequence is MNTQPTRAIETSGLVKVYNGTRAVDGLDLNVPAGLVYGILGPNGAGKSTTIRMLATLLRPDGGTARVFGHDVTSEPDTVRRRISVTGQYASVDEGLTGTENLVMMGRLQGYSWARARERAAELIDGFGLGDARDRLLKTYSGGMRRRLDIAASIVVTPDLLFLDEPTTGLDPRSRNQVWDIVRALVDAGTTVLLTTQYLDEADQLADRIAVIDHGRVIAEGTTGELKSSLGSNVLRLRLHDAQSRAEAERLLSAELGVTIHRDSDPTALSARIDDPRQGMRALAELSRTHLEVRSFSLGQSSLDEVFLALTGHPADDRSTEEAAEEEKVA.

The region spanning 9–239 (IETSGLVKVY…LGSNVLRLRL (231 aa)) is the ABC transporter domain. ATP is bound at residue 41 to 48 (GPNGAGKS).

This sequence belongs to the ABC transporter superfamily. Drug exporter-1 (DrugE1) (TC 3.A.1.105) family. As to quaternary structure, the complex is composed of two ATP-binding proteins (DrrA) and two transmembrane proteins (DrrB).

Its subcellular location is the cell membrane. It carries out the reaction daunorubicin(in) + ATP + H2O = daunorubicin(out) + ADP + phosphate + H(+). In terms of biological role, part of the ABC transporter complex DrrAB involved in daunorubicin and doxorubicin resistance. Responsible for energy coupling to the transport system. Binds ATP or GTP. The sequence is that of Daunorubicin/doxorubicin resistance ATP-binding protein DrrA (drrA) from Streptomyces peucetius.